The primary structure comprises 176 residues: UPF0262 protein GbCGDNIH1_1393 (176 aa).

The protein belongs to the UPF0262 family.

In Granulibacter bethesdensis (strain ATCC BAA-1260 / CGDNIH1), this protein is UPF0262 protein GbCGDNIH1_1393.